A 391-amino-acid chain; its full sequence is Phosphoglycerate kinase (391 aa).

Substrate contacts are provided by residues 21 to 23 (DLN), R36, 59 to 62 (HLGR), R113, and R146. Residues K197, E319, and 345 to 348 (GGDT) each bind ATP.

It belongs to the phosphoglycerate kinase family. In terms of assembly, monomer.

Its subcellular location is the cytoplasm. The enzyme catalyses (2R)-3-phosphoglycerate + ATP = (2R)-3-phospho-glyceroyl phosphate + ADP. Its pathway is carbohydrate degradation; glycolysis; pyruvate from D-glyceraldehyde 3-phosphate: step 2/5. This Shewanella sp. (strain MR-7) protein is Phosphoglycerate kinase.